The sequence spans 430 residues: Histidine--tRNA ligase (430 aa).

This sequence belongs to the class-II aminoacyl-tRNA synthetase family. In terms of assembly, homodimer.

The protein localises to the cytoplasm. The enzyme catalyses tRNA(His) + L-histidine + ATP = L-histidyl-tRNA(His) + AMP + diphosphate + H(+). The chain is Histidine--tRNA ligase from Acaryochloris marina (strain MBIC 11017).